Here is a 462-residue protein sequence, read N- to C-terminus: Cytochrome P450 20A1 (462 aa).

Residues phenylalanine 4 to proline 24 form a helical membrane-spanning segment. Cysteine 409 lines the heme pocket.

It belongs to the cytochrome P450 family. Requires heme as cofactor.

The protein localises to the membrane. The polypeptide is Cytochrome P450 20A1 (CYP20A1) (Homo sapiens (Human)).